The following is a 212-amino-acid chain: Protein-L-isoaspartate O-methyltransferase (212 aa).

Residue Ser60 is part of the active site.

It belongs to the methyltransferase superfamily. L-isoaspartyl/D-aspartyl protein methyltransferase family.

The protein localises to the cytoplasm. The enzyme catalyses [protein]-L-isoaspartate + S-adenosyl-L-methionine = [protein]-L-isoaspartate alpha-methyl ester + S-adenosyl-L-homocysteine. Functionally, catalyzes the methyl esterification of L-isoaspartyl residues in peptides and proteins that result from spontaneous decomposition of normal L-aspartyl and L-asparaginyl residues. It plays a role in the repair and/or degradation of damaged proteins. The chain is Protein-L-isoaspartate O-methyltransferase from Pseudomonas putida (strain W619).